Here is a 140-residue protein sequence, read N- to C-terminus: L-fucose mutarotase (140 aa).

Residue His-22 is the Proton donor of the active site. Substrate-binding positions include Asp-30, Arg-107, and 129-131 (YGN).

Belongs to the RbsD / FucU family. FucU mutarotase subfamily. Homodecamer.

The protein localises to the cytoplasm. The enzyme catalyses alpha-L-fucose = beta-L-fucose. It participates in carbohydrate metabolism; L-fucose metabolism. In terms of biological role, involved in the anomeric conversion of L-fucose. This is L-fucose mutarotase from Salmonella paratyphi B (strain ATCC BAA-1250 / SPB7).